Here is a 631-residue protein sequence, read N- to C-terminus: Biotin--protein ligase (631 aa).

The BPL/LPL catalytic domain occupies 341–553 (ELYAKLINGC…QFDRYHRLLL (213 aa)).

The protein belongs to the biotin--protein ligase family. In terms of assembly, monomer.

It is found in the cytoplasm. It catalyses the reaction apo-[methylmalonyl-CoA:pyruvate carboxytransferase] + biotin + ATP = holo-[methylmalonyl-CoA:pyruvate carboxytransferase] + AMP + diphosphate + H(+). The catalysed reaction is apo-[propionyl-CoA:carbon-dioxide ligase (ADP-forming)] + biotin + ATP = holo-[propionyl-CoA:carbon-dioxide ligase (ADP-forming)] + AMP + diphosphate + H(+). It carries out the reaction apo-[3-methylcrotonoyl-CoA:carbon-dioxide ligase (ADP-forming)] + biotin + ATP = holo-[3-methylcrotonoyl-CoA:carbon-dioxide ligase (ADP-forming)] + AMP + diphosphate + H(+). The enzyme catalyses biotin + L-lysyl-[protein] + ATP = N(6)-biotinyl-L-lysyl-[protein] + AMP + diphosphate + H(+). Post-translational modification of specific protein by attachment of biotin. Acts on various carboxylases such as acetyl-CoA-carboxylase, pyruvate carboxylase, propionyl CoA carboxylase, and 3-methylcrotonyl CoA carboxylase. This Schizosaccharomyces pombe (strain 972 / ATCC 24843) (Fission yeast) protein is Biotin--protein ligase (bpl1).